We begin with the raw amino-acid sequence, 710 residues long: PWWP domain-containing DNA repair factor 3A (710 aa).

The tract at residues 106–160 is disordered; the sequence is QESSAGTGRADRSLRGKPMEHVSSPCDSNSSSLPRGDVLGSSRPHRRRPCVQQSL. Over residues 114–125 the composition is skewed to basic and acidic residues; the sequence is RADRSLRGKPME. Residues 128-137 are compositionally biased toward low complexity; sequence SSPCDSNSSS. Serine 161 bears the Phosphoserine mark. Disordered stretches follow at residues 177 to 204 and 230 to 398; these read KKGL…ESGS and NGSS…EEPP. The span at 288–297 shows a compositional bias: low complexity; sequence PSACSEPGEC. Phosphoserine is present on residues serine 374 and serine 375. Over residues 375–385 the composition is skewed to polar residues; sequence SEESMGSNSMR. In terms of domain architecture, PWWP spans 411–472; sequence VGMLVWHKHK…KHFDCKEKQT (62 aa).

The protein belongs to the PWWP3A family. Interacts with TP53BP1 (via BRCT domain); the interaction is not dependent on its phosphorylation status. Binds nucleosomes. Interacts with trimethylated 'Lys-36' of histone H3 (H3K36me3) (in vitro).

The protein localises to the nucleus. Functionally, involved in the DNA damage response pathway by contributing to the maintenance of chromatin architecture. Recruited to the vicinity of DNA breaks by TP53BP1 and plays an accessory role to facilitate damage-induced chromatin changes and promoting chromatin relaxation. Required for efficient DNA repair and cell survival following DNA damage. The polypeptide is PWWP domain-containing DNA repair factor 3A (Homo sapiens (Human)).